Reading from the N-terminus, the 229-residue chain is Imidazoleglycerol-phosphate dehydratase (229 aa).

It belongs to the imidazoleglycerol-phosphate dehydratase family.

It carries out the reaction D-erythro-1-(imidazol-4-yl)glycerol 3-phosphate = 3-(imidazol-4-yl)-2-oxopropyl phosphate + H2O. Its pathway is amino-acid biosynthesis; L-histidine biosynthesis; L-histidine from 5-phospho-alpha-D-ribose 1-diphosphate: step 6/9. This is Imidazoleglycerol-phosphate dehydratase from Neurospora crassa (strain ATCC 24698 / 74-OR23-1A / CBS 708.71 / DSM 1257 / FGSC 987).